The primary structure comprises 146 residues: MAVYLLAVAILFCIQGWPLGTVQGQVMPFMEVYRHSVCQPRETLVSILEEYPGEISHIFRPSCVTALRCGGCCTDESLECTATGKRSVGREIMRLSPHKGTSEKEVMQFTEHTDCECRPRSASGVNSRKHKRNPEEGEPRAKFPFV.

An N-terminal signal peptide occupies residues 1–24 (MAVYLLAVAILFCIQGWPLGTVQG). Position 25 is a pyrrolidone carboxylic acid (glutamine 25). 3 disulfide bridges follow: cysteine 38–cysteine 80, cysteine 69–cysteine 115, and cysteine 73–cysteine 117. The segment at 118–146 (RPRSASGVNSRKHKRNPEEGEPRAKFPFV) is disordered. Residues 133–146 (NPEEGEPRAKFPFV) are compositionally biased toward basic and acidic residues.

It belongs to the PDGF/VEGF growth factor family. Snake venom VEGF subfamily. In terms of assembly, homodimer; disulfide-linked. Interacts with VEGF receptor-1 (FLT1) with a high affinity, whereas it binds to VEGF receptor-2 (KDR) with a low affinity. Does not bind VEGF receptor-3 (FLT4). Expressed by the venom gland.

The protein localises to the secreted. In terms of biological role, snake venom VEGFs that may contribute to venom dispersion and prey subjugation by inducing vascular permeability and hypotension. This protein induces an increase in capillary permeability after intradermal injection, as well as a drastic hypotensive effect after intravenous injection. The hypotension is mediated by nitric oxide (NO), which is produced by VEGF-activated endothelium NO synthase. Also induces angiogenesis in vitro. Like other crotalid VEGFs, this protein interacts with VEGF receptor-1 (FLT1) with a high affinity, whereas it binds to VEGF receptor-2 (KDR) with a low affinity. The polypeptide is Snake venom vascular endothelial growth factor toxin (Bothrops jararaca (Jararaca)).